A 117-amino-acid polypeptide reads, in one-letter code: Large ribosomal subunit protein bL19 (117 aa).

The protein belongs to the bacterial ribosomal protein bL19 family.

This protein is located at the 30S-50S ribosomal subunit interface and may play a role in the structure and function of the aminoacyl-tRNA binding site. The chain is Large ribosomal subunit protein bL19 from Kineococcus radiotolerans (strain ATCC BAA-149 / DSM 14245 / SRS30216).